The primary structure comprises 100 residues: uncharacterized protein (100 aa).

The next 3 membrane-spanning stretches (helical) occupy residues 7–28 (TLIG…LLSL), 38–60 (AQLS…ILII), and 65–87 (LSAL…ANGV).

Its subcellular location is the cell membrane. This is an uncharacterized protein from Archaeoglobus fulgidus (strain ATCC 49558 / DSM 4304 / JCM 9628 / NBRC 100126 / VC-16).